Reading from the N-terminus, the 172-residue chain is L-amino acid N-acyltransferase MnaT (172 aa).

An N-acetyltransferase domain is found at 1 to 163 (MSIRFARKAD…DLTFMQLQLD (163 aa)). Acetyl-CoA-binding positions include 85–87 (VYV), 93–98 (GKGLGR), N124, and S133.

This sequence belongs to the acetyltransferase family. PAT/BAR subfamily.

The enzyme catalyses L-methionine + acetyl-CoA = N-acetyl-L-methionine + CoA + H(+). It catalyses the reaction propanoyl-CoA + L-methionine = N-propanoyl-L-methioninate + CoA + H(+). The catalysed reaction is L-alpha-phenylglycine + acetyl-CoA = N-acetyl-L-alpha-phenylglycine + CoA + H(+). It carries out the reaction L-methionine sulfoximine + acetyl-CoA = N-acetyl-L-methionine sulfoximine + CoA + H(+). The enzyme catalyses L-methionine sulfone + acetyl-CoA = N-acetyl-L-methionine sulfone + CoA + H(+). In terms of biological role, acyltransferase that appears to be required for E.coli optimal growth rate and yield via the formation of N-acetylated amino acids. Catalyzes the acylation of L-methionine using acetyl-CoA or propanoyl-CoA as acyl donors, and the acetylation of L-phenylglycine. Is also able to N-acylate other free L-amino acids and their derivatives using a CoA thioester as cosubstrate. Using acetyl-CoA as an acyl donor, substrate specificity is methionine sulfone &gt; methionine sulfoximine &gt; methionine sulfoxide &gt; methionine. Asparagine, lysine, glutamine, aspartate and glutamate are very poor substrates. Using methionine as a substrate, acyl donor preference is propanoyl-CoA &gt; acetyl-CoA &gt;&gt; butyryl-CoA. Likely plays a role in the resistance against the toxic effects of L-methionine sulfoximine (MSX), via its ability to catalyze its acetylation; MSX is a rare amino acid which inhibits glutamine synthetase (GlnA). The chain is L-amino acid N-acyltransferase MnaT from Escherichia coli (strain K12).